Consider the following 548-residue polypeptide: MASSSANKCRPLANFHPTVWGYHFLSYTHEITNQEKVEVDEYKETIRKMLVEAPEGSEQKLVLIDAMQRLGVAYHFDNEIETSIQNIFDASSKQNDNDNNLYVVSLRFRLVRQQGHYMSSDVFKQFINQDGKFKETLTNDVQGLLSLYEASHLRVRDEEILEEALTFTTTHLESTVSNLSNNNSLKAEVTEAFSQPIRMTLPRVGARKYISIYENNDAHNHLLLKFAKLDFNMLQKLHQRELSDLTRWWKDLDFANKYPYARDRLVECYFWILGVYFEPKYSRARKMMTKVIQMASFFDDTFDAYATFDELEPFNNAIQRWDINAIDSVPPYLRHAYQALLDIYSEMEQALAKEFKSDRVYYAKYEMKKLVRAYFKEAQWLNNDNHIPKYEEHMENAMVSAGYMMGATTCLVGVEEFISKETFEWMINEPLIVRASSLIARAMDDIVGHEVEQQREHGASLIECYMKDYGVSKQEAYVKFQKEVTNGWMDINREFFCPDVEVPKFVLERVLNFTRVINTLYKEKDEYTNSKGKFKNMIISLLVESVEI.

Positions 299, 303, 444, and 452 each coordinate Mg(2+). A DDXXD motif motif is present at residues 299 to 303 (DDTFD).

The protein belongs to the terpene synthase family. Tpsa subfamily. Requires Mg(2+) as cofactor. It depends on Mn(2+) as a cofactor. As to expression, mostly expressed in leaves, to a lower extent in stems, trichomes, flowers and roots and, at low levels, in fruits.

It carries out the reaction (2E,6E)-farnesyl diphosphate = alpha-humulene + diphosphate. The enzyme catalyses (2E,6E)-farnesyl diphosphate = (-)-(E)-beta-caryophyllene + diphosphate. The catalysed reaction is (2Z,6Z)-farnesyl diphosphate = beta-bisabolene + diphosphate. It catalyses the reaction (2E)-geranyl diphosphate = terpinolene + diphosphate. It carries out the reaction (2E)-geranyl diphosphate = limonene + diphosphate. The enzyme catalyses (2E)-geranyl diphosphate = beta-myrcene + diphosphate. The catalysed reaction is (2E)-geranyl diphosphate = (E)-beta-ocimene + diphosphate. It catalyses the reaction (2Z,6Z)-farnesyl diphosphate = gamma-curcumene + diphosphate. It carries out the reaction (2Z,6Z)-farnesyl diphosphate = (Z)-gamma-bisabolene + diphosphate. Its pathway is secondary metabolite biosynthesis; terpenoid biosynthesis. Sesquiterpene synthase involved in the biosynthesis of volatile compounds. Mediates the conversion of (2E,6E)-farnesyl diphosphate (FPP) into (1E,4E,8E)-alpha-humulene and (-)-(E)-beta-caryophyllene, and of (2Z,6Z)-farnesyl diphosphate ((ZZ)-FPP) into beta-bisabolene, gamma-curcumene and (Z)-gamma-bisabolene. Can act with a low efficiency as a monoterpene synthase with geranyl diphosphate (GPP) as substrate, thus producing beta-myrcene, (E)-beta-ocimene, limonene and terpinolene. This is Sesquiterpene synthase 12 from Solanum lycopersicum (Tomato).